Consider the following 129-residue polypeptide: Small ribosomal subunit protein uS11 (129 aa).

It belongs to the universal ribosomal protein uS11 family. In terms of assembly, part of the 30S ribosomal subunit. Interacts with proteins S7 and S18. Binds to IF-3.

In terms of biological role, located on the platform of the 30S subunit, it bridges several disparate RNA helices of the 16S rRNA. Forms part of the Shine-Dalgarno cleft in the 70S ribosome. The sequence is that of Small ribosomal subunit protein uS11 from Geobacillus sp. (strain WCH70).